Here is a 149-residue protein sequence, read N- to C-terminus: Large ribosomal subunit protein eL8 (149 aa).

It belongs to the eukaryotic ribosomal protein eL8 family. In terms of assembly, part of the 50S ribosomal subunit. Probably part of the RNase P complex.

It is found in the cytoplasm. Its function is as follows. Multifunctional RNA-binding protein that recognizes the K-turn motif in ribosomal RNA, the RNA component of RNase P, box H/ACA, box C/D and box C'/D' sRNAs. The polypeptide is Large ribosomal subunit protein eL8 (Pyrobaculum calidifontis (strain DSM 21063 / JCM 11548 / VA1)).